Consider the following 78-residue polypeptide: Acyl carrier protein (78 aa).

The Carrier domain occupies 2–77 (SDIEQRVKQA…SAIDYVTKKL (76 aa)). Residue S37 is modified to O-(pantetheine 4'-phosphoryl)serine.

This sequence belongs to the acyl carrier protein (ACP) family. Post-translationally, 4'-phosphopantetheine is transferred from CoA to a specific serine of apo-ACP by AcpS. This modification is essential for activity because fatty acids are bound in thioester linkage to the sulfhydryl of the prosthetic group.

Its subcellular location is the cytoplasm. Its pathway is lipid metabolism; fatty acid biosynthesis. Its function is as follows. Carrier of the growing fatty acid chain in fatty acid biosynthesis. This Acinetobacter baumannii (strain AB307-0294) protein is Acyl carrier protein.